Reading from the N-terminus, the 399-residue chain is Proteasome-activating nucleotidase (399 aa).

A coiled-coil region spans residues 19 to 60 (ITYLKRRIRQLELQVRMLEADKERLERELSRLRSEMSRLRQP). ATP is bound by residues 184-189 (GCGKTL) and histidine 323. Residues 397-399 (IYG) form a docks into pockets in the proteasome alpha-ring to cause gate opening region.

Belongs to the AAA ATPase family. As to quaternary structure, homohexamer. The hexameric complex has a two-ring architecture resembling a top hat that caps the 20S proteasome core at one or both ends. Upon ATP-binding, the C-terminus of PAN interacts with the alpha-rings of the proteasome core by binding to the intersubunit pockets.

It localises to the cytoplasm. Functionally, ATPase which is responsible for recognizing, binding, unfolding and translocation of substrate proteins into the archaeal 20S proteasome core particle. Is essential for opening the gate of the 20S proteasome via an interaction with its C-terminus, thereby allowing substrate entry and access to the site of proteolysis. Thus, the C-termini of the proteasomal ATPase function like a 'key in a lock' to induce gate opening and therefore regulate proteolysis. Unfolding activity requires energy from ATP hydrolysis, whereas ATP binding alone promotes ATPase-20S proteasome association which triggers gate opening, and supports translocation of unfolded substrates. In Pyrococcus horikoshii (strain ATCC 700860 / DSM 12428 / JCM 9974 / NBRC 100139 / OT-3), this protein is Proteasome-activating nucleotidase.